A 291-amino-acid chain; its full sequence is Probable 2-(5''-triphosphoribosyl)-3'-dephosphocoenzyme-A synthase (291 aa).

This sequence belongs to the CitG/MdcB family.

It carries out the reaction 3'-dephospho-CoA + ATP = 2'-(5''-triphospho-alpha-D-ribosyl)-3'-dephospho-CoA + adenine. Functionally, involved in the formation of 2-(5''-phosphoribosyl)-3'-dephosphocoenzyme-A, the prosthetic group of the acyl-carrier protein of the malonate decarboxylase. The polypeptide is Probable 2-(5''-triphosphoribosyl)-3'-dephosphocoenzyme-A synthase (Pseudomonas fluorescens (strain ATCC BAA-477 / NRRL B-23932 / Pf-5)).